Reading from the N-terminus, the 572-residue chain is Fatty acid amide hydrolase 1 (572 aa).

The first 14 residues, 1 to 14, serve as a signal peptide directing secretion; the sequence is MIFYLVLLVLGAIA. A coiled-coil region spans residues 32 to 63; the sequence is IVAQRRRDDLSKNVEQARKAADKLDTQRRDWI. Active-site charge relay system residues include K139 and S214. Substrate contacts are provided by residues S214 and 235–238; that span reads VGGS. The active-site Acyl-ester intermediate is the S238.

It belongs to the amidase family. As to expression, expressed in the pharynx, some pharyngeal neurons, the posterior intestine and anal depressor muscles.

It catalyses the reaction N-(5Z,8Z,11Z,14Z-eicosatetraenoyl)-ethanolamine + H2O = ethanolamine + (5Z,8Z,11Z,14Z)-eicosatetraenoate. The catalysed reaction is (9Z)-octadecenamide + H2O = (9Z)-octadecenoate + NH4(+). It carries out the reaction (5Z,8Z,11Z,14Z,17Z-eicosapentaenoyl) ethanolamine + H2O = (5Z,8Z,11Z,14Z,17Z)-eicosapentaenoate + ethanolamine. The enzyme catalyses N-(9Z-hexadecenoyl) ethanolamine + H2O = (9Z)-hexadecenoate + ethanolamine. It catalyses the reaction N-(9Z-octadecenoyl) ethanolamine + H2O = ethanolamine + (9Z)-octadecenoate. The catalysed reaction is N-octadecanoyl ethanolamine + H2O = octadecanoate + ethanolamine. It carries out the reaction N-docosanoyl-ethanolamine + H2O = docosanoate + ethanolamine. The enzyme catalyses N-(15Z-tetracosenoyl)-ethanolamine + H2O = (15Z)-tetracosenoate + ethanolamine. It catalyses the reaction N-hexadecanoylethanolamine + H2O = ethanolamine + hexadecanoate. The catalysed reaction is N-(9Z,12Z-octadecadienoyl)-ethanolamine + H2O = ethanolamine + (9Z,12Z)-octadecadienoate. It carries out the reaction (9Z)-octadecenoate + glycine = N-(9Z-octadecenoyl)glycine + H2O. The enzyme catalyses N-(5Z,8Z,11Z,14Z)-eicosatetraenoyl-glycine + H2O = (5Z,8Z,11Z,14Z)-eicosatetraenoate + glycine. It catalyses the reaction N-(5Z,8Z,11Z,14Z-eicosatetraenoyl)-L-serine + H2O = (5Z,8Z,11Z,14Z)-eicosatetraenoate + L-serine. Its function is as follows. Catalyzes the hydrolysis of endogenous amidated lipids like anandamide (AEA or N-(5Z,8Z,11Z,14Z-eicosatetraenoyl)-ethanolamine) and eicosapentaneoyl ethanolamide (EPEA or (5Z,8Z,11Z,14Z,17Z-eicosapentaenoyl) ethanolamine), as well as other fatty amides, to their corresponding fatty acids, thereby regulating the signaling functions of these molecules. EPEA promotes dauer formation and may constitute a signal of high nutrient availability. Breakdown of EPEA may promote lifespan extension when nutrient availability is high. Facilitates axon regeneration after injury by degradating inhibitory compounds such as AEA. FAAH cooperates with PM20D1 in the hydrolysis of amino acid-conjugated fatty acids such as N-fatty acyl glycine and N-fatty acyl-L-serine, thereby acting as a physiological regulator of specific subsets of intracellular, but not of extracellular, N-fatty acyl amino acids. The polypeptide is Fatty acid amide hydrolase 1 (Caenorhabditis elegans).